The primary structure comprises 878 residues: Alanine--tRNA ligase (878 aa).

Residues His-558, His-562, Cys-663, and His-667 each contribute to the Zn(2+) site.

Belongs to the class-II aminoacyl-tRNA synthetase family. The cofactor is Zn(2+).

It is found in the cytoplasm. It catalyses the reaction tRNA(Ala) + L-alanine + ATP = L-alanyl-tRNA(Ala) + AMP + diphosphate. In terms of biological role, catalyzes the attachment of alanine to tRNA(Ala) in a two-step reaction: alanine is first activated by ATP to form Ala-AMP and then transferred to the acceptor end of tRNA(Ala). Also edits incorrectly charged Ser-tRNA(Ala) and Gly-tRNA(Ala) via its editing domain. This Mycoplasmopsis synoviae (strain 53) (Mycoplasma synoviae) protein is Alanine--tRNA ligase.